An 814-amino-acid polypeptide reads, in one-letter code: Telomere repeats-binding bouquet formation protein 1 (814 aa).

ARM repeat units lie at residues 93 to 136 and 327 to 368; these read EMFR…KTSR and GGLP…GMST. Disordered regions lie at residues 461 to 521, 551 to 584, and 653 to 753; these read DQDS…ELKR, STPTEGNRDTQGPDIFRHPDPVKRNQREPSLSDD, and FRRS…KRQN. Residues 488-512 adopt a coiled-coil conformation; it reads EKSKKRKHKQKRENERSDNQETRRE. Basic and acidic residues-rich tracts occupy residues 499–521, 565–577, and 679–688; these read RENERSDNQETRREGVNKRELKR, IFRHPDPVKRNQR, and EHSTSAQEHK. The segment covering 689-699 has biased composition (basic residues); it reads QKSKREKHKLS. Residues 714–741 show a composition bias toward basic and acidic residues; it reads RPRETYSPDVKQWTDHRHLKKSSEDARS. Positions 746–799 constitute a Myb-like domain; the sequence is GRHRKRQNWSDKELCYLTKGVKRFGHSWNTILWKYPFHPGRTNVDLAKKFYHMQ.

The protein belongs to the TERB1 family. Component of the MAJIN-TERB1-TERB2 complex.

The protein resides in the chromosome. Its subcellular location is the telomere. It localises to the nucleus inner membrane. Meiosis-specific telomere-associated protein involved in meiotic telomere attachment to the nucleus inner membrane, a crucial step for homologous pairing and synapsis. Component of the MAJIN-TERB1-TERB2 complex, which promotes telomere cap exchange by mediating attachment of telomeric DNA to the inner nuclear membrane and replacement of the protective cap of telomeric chromosomes: in early meiosis, the MAJIN-TERB1-TERB2 complex associates with telomeric DNA and the shelterin/telosome complex. During prophase, the complex matures and promotes release of the shelterin/telosome complex from telomeric DNA. In the MAJIN-TERB1-TERB2 complex, TERB1 probably mediates association with the shelterin/telosome complex. This is Telomere repeats-binding bouquet formation protein 1 (ccdc79) from Danio rerio (Zebrafish).